Here is a 287-residue protein sequence, read N- to C-terminus: 4-diphosphocytidyl-2-C-methyl-D-erythritol kinase (287 aa).

K12 is an active-site residue. An ATP-binding site is contributed by 97 to 107 (PMGGGLGGGSS). D139 is a catalytic residue.

Belongs to the GHMP kinase family. IspE subfamily.

It carries out the reaction 4-CDP-2-C-methyl-D-erythritol + ATP = 4-CDP-2-C-methyl-D-erythritol 2-phosphate + ADP + H(+). Its pathway is isoprenoid biosynthesis; isopentenyl diphosphate biosynthesis via DXP pathway; isopentenyl diphosphate from 1-deoxy-D-xylulose 5-phosphate: step 3/6. Functionally, catalyzes the phosphorylation of the position 2 hydroxy group of 4-diphosphocytidyl-2C-methyl-D-erythritol. This Marinobacter nauticus (strain ATCC 700491 / DSM 11845 / VT8) (Marinobacter aquaeolei) protein is 4-diphosphocytidyl-2-C-methyl-D-erythritol kinase.